Here is a 283-residue protein sequence, read N- to C-terminus: Peroxisomal protein 2 (283 aa).

The short motif at 281–283 (VKL) is the Peroxisomal target signal 1 (PTS1) element.

The protein belongs to the PXP2 family.

The protein resides in the peroxisome matrix. It is found in the cytoplasm. It localises to the cytosol. Its function is as follows. Probably involved in peroxisome formation or maintenance as well as in amino acid metabolism. In Saccharomyces cerevisiae (strain ATCC 204508 / S288c) (Baker's yeast), this protein is Peroxisomal protein 2.